A 115-amino-acid chain; its full sequence is Nitrogenase-stabilizing/protective protein NifW (115 aa).

This sequence belongs to the NifW family. Homotrimer; associates with NifD.

May protect the nitrogenase Fe-Mo protein from oxidative damage. In Azotobacter vinelandii (strain DJ / ATCC BAA-1303), this protein is Nitrogenase-stabilizing/protective protein NifW.